Reading from the N-terminus, the 168-residue chain is MAGSVNKVILVGNLGADPEIRRLNSGDMVANLRIATSESWRDRQTGERKDRTEWHSVVIFNENLAKVAEQYLKKGAKVYIEGALQTRKWQDQNGNDRYSKEIVLQKFRGELQMLDSRSEGGEGRSFGGGGNRNQMSDYSGGGGDFGSSGPSSGSSGGFSRDLDDEIPF.

The SSB domain occupies 5 to 111; sequence VNKVILVGNL…IVLQKFRGEL (107 aa). A DNA-binding region spans residues 54–60; the sequence is WHSVVIF. A disordered region spans residues 113-168; that stretch reads MLDSRSEGGEGRSFGGGGNRNQMSDYSGGGGDFGSSGPSSGSSGGFSRDLDDEIPF. Positions 147-159 are enriched in low complexity; the sequence is SSGPSSGSSGGFS. Residues 163–168 carry the Important for interaction with partner proteins motif; that stretch reads DDEIPF.

In terms of assembly, homotetramer.

Plays an important role in DNA replication, recombination and repair. Binds to ssDNA and to an array of partner proteins to recruit them to their sites of action during DNA metabolism. This chain is Single-stranded DNA-binding protein (ssb), found in Brucella abortus (strain 2308).